The chain runs to 258 residues: uncharacterized protein (258 aa).

The segment covering 40–54 (AQKTDTPLDSSSYAV) has biased composition (polar residues). Residues 40-63 (AQKTDTPLDSSSYAVTSPEEAPNE) are disordered.

This is an uncharacterized protein from Treponema pallidum (strain Nichols).